The sequence spans 955 residues: RNA polymerase-associated protein RapA (955 aa).

The region spanning 163-333 is the Helicase ATP-binding domain; the sequence is EVGHRYAPRV…FARLRLLDPE (171 aa). 176 to 183 contacts ATP; it reads DEVGLGKT. Residues 279 to 282 carry the DEAH box motif; that stretch reads DEAH. The 165-residue stretch at 478–642 folds into the Helicase C-terminal domain; the sequence is RVEWLLELLL…AVRDELFELL (165 aa).

It belongs to the SNF2/RAD54 helicase family. RapA subfamily. As to quaternary structure, interacts with the RNAP. Has a higher affinity for the core RNAP than for the holoenzyme. Its ATPase activity is stimulated by binding to RNAP.

Functionally, transcription regulator that activates transcription by stimulating RNA polymerase (RNAP) recycling in case of stress conditions such as supercoiled DNA or high salt concentrations. Probably acts by releasing the RNAP, when it is trapped or immobilized on tightly supercoiled DNA. Does not activate transcription on linear DNA. Probably not involved in DNA repair. This Aeromonas hydrophila subsp. hydrophila (strain ATCC 7966 / DSM 30187 / BCRC 13018 / CCUG 14551 / JCM 1027 / KCTC 2358 / NCIMB 9240 / NCTC 8049) protein is RNA polymerase-associated protein RapA.